A 311-amino-acid polypeptide reads, in one-letter code: uncharacterized protein (311 aa).

A helical membrane pass occupies residues 168–188 (FNVMKGAILGLPIIGGIIVGV).

It localises to the cell membrane. This is an uncharacterized protein from Edwardsiella tarda.